The sequence spans 474 residues: Glutamyl-tRNA(Gln) amidotransferase subunit A (474 aa).

Active-site charge relay system residues include Lys-76 and Ser-151. Ser-175 functions as the Acyl-ester intermediate in the catalytic mechanism.

It belongs to the amidase family. GatA subfamily. In terms of assembly, heterotrimer of A, B and C subunits.

The catalysed reaction is L-glutamyl-tRNA(Gln) + L-glutamine + ATP + H2O = L-glutaminyl-tRNA(Gln) + L-glutamate + ADP + phosphate + H(+). Its function is as follows. Allows the formation of correctly charged Gln-tRNA(Gln) through the transamidation of misacylated Glu-tRNA(Gln) in organisms which lack glutaminyl-tRNA synthetase. The reaction takes place in the presence of glutamine and ATP through an activated gamma-phospho-Glu-tRNA(Gln). This Chlorobium limicola (strain DSM 245 / NBRC 103803 / 6330) protein is Glutamyl-tRNA(Gln) amidotransferase subunit A.